The sequence spans 772 residues: Mitochondrial intermediate peptidase (772 aa).

Residues 1–37 (MLRTIILKAGSNASIPSPSRQNKLLRFFATAGAVSRT) constitute a mitochondrion transit peptide. His558 provides a ligand contact to Zn(2+). Glu559 is an active-site residue. 2 residues coordinate Zn(2+): His562 and Glu587.

This sequence belongs to the peptidase M3 family. Requires Zn(2+) as cofactor.

The protein resides in the mitochondrion matrix. It catalyses the reaction Release of an N-terminal octapeptide as second stage of processing of some proteins imported into the mitochondrion.. Its activity is regulated as follows. Stimulated by Fe(2+). Cleaves proteins, imported into the mitochondrion, to their mature size. While most mitochondrial precursor proteins are processed to the mature form in one step by mitochondrial processing peptidase (MPP), the sequential cleavage by MIP of an octapeptide after initial processing by MPP is a required step for a subgroup of nuclear-encoded precursor proteins destined for the matrix or the inner membrane. Cleaves precursor proteins of respiratory components, including subunits of the electron transport chain and tricarboxylic acid cycle enzymes, and components of the mitochondrial genetic machinery, including ribosomal proteins, translation factors, and proteins required for mitochondrial DNA metabolism. In Saccharomyces cerevisiae (strain ATCC 204508 / S288c) (Baker's yeast), this protein is Mitochondrial intermediate peptidase (OCT1).